A 454-amino-acid polypeptide reads, in one-letter code: Probable ECA polymerase (454 aa).

A run of 11 helical transmembrane segments spans residues 6-26 (FSGL…LTWF), 37-57 (VFFS…TSIL), 63-83 (VAVV…CFYA), 122-142 (MMAV…FLLF), 157-177 (GVAL…VYFL), 183-203 (AWLF…MIVG), 209-229 (IIIA…ISPG), 230-250 (MLAA…LKRY), 343-363 (LVVM…GLII), 380-400 (YKAA…IVLA), and 411-431 (VIFF…IYWL).

It belongs to the WzyE family. As to quaternary structure, probably part of a complex composed of WzxE, WzyE and WzzE.

It localises to the cell inner membrane. It participates in bacterial outer membrane biogenesis; enterobacterial common antigen biosynthesis. In terms of biological role, probably involved in the polymerization of enterobacterial common antigen (ECA) trisaccharide repeat units. The chain is Probable ECA polymerase from Cronobacter sakazakii (strain ATCC BAA-894) (Enterobacter sakazakii).